A 153-amino-acid chain; its full sequence is uncharacterized protein (153 aa).

An N-terminal signal peptide occupies residues 1–22; that stretch reads MKMLKKGTAVLFVMIMAVMLVA. A lipid anchor (N-palmitoyl cysteine) is attached at Cys23. The S-diacylglycerol cysteine moiety is linked to residue Cys23. The segment at 117–153 is disordered; the sequence is DMNKIPGMSSNGDTSKGISMEESAKMLESQGYKEVSK. A compositionally biased stretch (polar residues) spans 124-133; it reads MSSNGDTSKG.

To E.coli YehR.

It is found in the cell membrane. This is an uncharacterized protein from Listeria monocytogenes serovar 1/2a (strain ATCC BAA-679 / EGD-e).